Here is a 124-residue protein sequence, read N- to C-terminus: Small ribosomal subunit protein uS12c (124 aa).

This sequence belongs to the universal ribosomal protein uS12 family. As to quaternary structure, part of the 30S ribosomal subunit.

It is found in the plastid. The protein localises to the chloroplast. In terms of biological role, with S4 and S5 plays an important role in translational accuracy. Located at the interface of the 30S and 50S subunits. The protein is Small ribosomal subunit protein uS12c (rps12) of Cyanidium caldarium (Red alga).